The primary structure comprises 226 residues: Small ribosomal subunit protein uS3 (226 aa).

The KH type-2 domain maps to 39 to 107; sequence VRNFIRKKLA…PVHINIEEIR (69 aa).

It belongs to the universal ribosomal protein uS3 family. In terms of assembly, part of the 30S ribosomal subunit. Forms a tight complex with proteins S10 and S14.

Its function is as follows. Binds the lower part of the 30S subunit head. Binds mRNA in the 70S ribosome, positioning it for translation. The protein is Small ribosomal subunit protein uS3 of Alkalilimnicola ehrlichii (strain ATCC BAA-1101 / DSM 17681 / MLHE-1).